The primary structure comprises 179 residues: Ribosome maturation factor RimM (179 aa).

The PRC barrel domain maps to 101 to 179 (EGEVYVHDLC…VELMHRWILE (79 aa)).

It belongs to the RimM family. Binds ribosomal protein uS19.

It localises to the cytoplasm. Its function is as follows. An accessory protein needed during the final step in the assembly of 30S ribosomal subunit, possibly for assembly of the head region. Essential for efficient processing of 16S rRNA. May be needed both before and after RbfA during the maturation of 16S rRNA. It has affinity for free ribosomal 30S subunits but not for 70S ribosomes. The polypeptide is Ribosome maturation factor RimM (Treponema denticola (strain ATCC 35405 / DSM 14222 / CIP 103919 / JCM 8153 / KCTC 15104)).